We begin with the raw amino-acid sequence, 248 residues long: UPF0651 protein YPL107W, mitochondrial (248 aa).

The transit peptide at Met1 to Asp26 directs the protein to the mitochondrion. Residues Lys69–Lys116 enclose the Oxidoreductase-like domain.

This sequence belongs to the UPF0651 family.

Its subcellular location is the mitochondrion. The sequence is that of UPF0651 protein YPL107W, mitochondrial from Saccharomyces cerevisiae (strain ATCC 204508 / S288c) (Baker's yeast).